Here is a 290-residue protein sequence, read N- to C-terminus: Ventral anterior homeobox 2 (290 aa).

Residues 1 to 17 are compositionally biased toward basic and acidic residues; sequence MGDGGAERDRGPARRAE. The segment at 1–75 is disordered; sequence MGDGGAERDR…GQPGPGEADH (75 aa). The homeobox DNA-binding region spans 102–161; sequence PKRTRTSFTAEQLYRLEMEFQRCQYVVGRERTELARQLNLSETQVKVWFQNRRTKQKKDQ. Positions 205–240 are disordered; the sequence is PSLPGLPASHRGTSLGDPRNSSPRLNPLSSASASPP. Residues 222–238 are compositionally biased toward low complexity; that stretch reads PRNSSPRLNPLSSASAS.

It belongs to the EMX homeobox family.

It localises to the nucleus. Its function is as follows. Transcription factor that may function in dorsoventral specification of the forebrain. Regulates the expression of Wnt signaling antagonists including the expression of a truncated TCF7L2 isoform that cannot bind CTNNB1 and acts therefore as a potent dominant-negative Wnt antagonist. Plays a crucial role in eye development and, in particular, in the specification of the ventral optic vesicle. May be a regulator of axial polarization in the retina. This is Ventral anterior homeobox 2 (VAX2) from Homo sapiens (Human).